We begin with the raw amino-acid sequence, 205 residues long: DNA-directed RNA polymerases IV and V subunit 4 (205 aa).

Residues 1 to 79 (MSEKGGKGLK…TKSSKNSLHS (79 aa)) form a disordered region. Residues 48–60 (NVSSDQQPFQSSA) are compositionally biased toward polar residues.

Belongs to the eukaryotic RPB4 RNA polymerase subunit family. As to quaternary structure, component of the RNA polymerase IV and V complexes. Interacts with NRPD1 and NRPE1. In terms of tissue distribution, expressed in shoot meristematic region and in root tips. Detected in cotyledons, flowers and young leaves.

Its subcellular location is the nucleus. Functionally, DNA-dependent RNA polymerase catalyzes the transcription of DNA into RNA using the four ribonucleoside triphosphates as substrates. Component of RNA polymerases IV and V which mediate short-interfering RNAs (siRNA) accumulation and subsequent RNA-directed DNA methylation-dependent (RdDM) transcriptional gene silencing (TGS) of endogenous repeated sequences, including transposable elements. Required for the de novo DNA methylation directed by the RdDM pathway. This chain is DNA-directed RNA polymerases IV and V subunit 4 (NRPD4), found in Arabidopsis thaliana (Mouse-ear cress).